A 232-amino-acid chain; its full sequence is MKQKYQYIKNTELDLKDKIFGINKPKNFSSNQVIQIIKKYYGLKKIGHAGTLDPLATGLLLVATNSKTKELNELILENKKYVAEIQFNYQTSTYDAEGEITNYTTRKIHEKTLKEELKFLNSTYWYQQPPVYSAVKIKGKKLYEYARANQEVSVPFKKVYINKVELISFDSISQKTFVSLDVSKGFYIRSFANDIGLRLNNYGYLLNLKRVEVGNYKLDQAYDFFDLVKQVN.

The Nucleophile role is filled by Asp-53.

It belongs to the pseudouridine synthase TruB family. Type 1 subfamily.

The enzyme catalyses uridine(55) in tRNA = pseudouridine(55) in tRNA. Its function is as follows. Responsible for synthesis of pseudouridine from uracil-55 in the psi GC loop of transfer RNAs. The sequence is that of tRNA pseudouridine synthase B from Malacoplasma penetrans (strain HF-2) (Mycoplasma penetrans).